The primary structure comprises 422 residues: Enolase (422 aa).

(2R)-2-phosphoglycerate is bound at residue Gln161. The Proton donor role is filled by Glu203. 3 residues coordinate Mg(2+): Asp240, Glu283, and Asp310. Lys335, Arg364, Ser365, and Lys386 together coordinate (2R)-2-phosphoglycerate. Catalysis depends on Lys335, which acts as the Proton acceptor.

The protein belongs to the enolase family. Mg(2+) serves as cofactor.

It is found in the cytoplasm. It localises to the secreted. Its subcellular location is the cell surface. It catalyses the reaction (2R)-2-phosphoglycerate = phosphoenolpyruvate + H2O. Its pathway is carbohydrate degradation; glycolysis; pyruvate from D-glyceraldehyde 3-phosphate: step 4/5. Functionally, catalyzes the reversible conversion of 2-phosphoglycerate (2-PG) into phosphoenolpyruvate (PEP). It is essential for the degradation of carbohydrates via glycolysis. The protein is Enolase of Deinococcus deserti (strain DSM 17065 / CIP 109153 / LMG 22923 / VCD115).